The chain runs to 327 residues: GTPase Obg (327 aa).

The Obg domain occupies 1–159 (MQFIDQANII…WEVQLELKLL (159 aa)). In terms of domain architecture, OBG-type G spans 160-327 (AEVGIIGLPN…SLLSEVWKRI (168 aa)). ATP contacts are provided by residues 166-173 (GLPNAGKS), 191-195 (FTTLI), 213-216 (DIPG), 280-283 (NKME), and 309-311 (SSS). Mg(2+) is bound by residues Ser-173 and Thr-193.

It belongs to the TRAFAC class OBG-HflX-like GTPase superfamily. OBG GTPase family. Monomer. The cofactor is Mg(2+).

It localises to the cytoplasm. Functionally, an essential GTPase which binds GTP, GDP and possibly (p)ppGpp with moderate affinity, with high nucleotide exchange rates and a fairly low GTP hydrolysis rate. Plays a role in control of the cell cycle, stress response, ribosome biogenesis and in those bacteria that undergo differentiation, in morphogenesis control. The protein is GTPase Obg of Prochlorococcus marinus (strain MIT 9301).